Consider the following 68-residue polypeptide: Large ribosomal subunit protein uL29 (68 aa).

This sequence belongs to the universal ribosomal protein uL29 family.

In Chloroflexus aggregans (strain MD-66 / DSM 9485), this protein is Large ribosomal subunit protein uL29.